A 499-amino-acid chain; its full sequence is MTKDGGKKDNQGQDKKAQQYGVTPQSVDFNDWYNEVVKKADLADNSPVAGAMVVRPYGSALWENIQRWLDDRFKASGHESLIFPTLIPMNFIMKEADHVEGFAPELFTVNKIGTEELAEPYVMRPTSETIIGHMWSGWLNSYRDLPFLHYQWGSVFRAELRTKAFLRTSEFFWHEGHTAHADEAEARAEVRQQLDLYHEFCRDVLALPVVRGEKTASERFAGAVATYSIEGMMRDGKALQSGTSHYLGQNFSRAFDVKYQTREQKEEFAHTTSWAISSRIIGAIIMTHGDDSGLMMPPRIAPIQVVVIPVGRKDNFDQMVQEGEKLAAELRAQGLRVKVDGRDGVTNGFKYNDWELKGVPVRIELGPRDLESGVLVVKNRHSEDKETLPRAEAVSGMSARLDTIHDFLMKRATDFLLANTAEVDSYDAFQREIEAGHWVRAYHCGEPACEKSIKEDTKATARNVPFDDAEFFAERGEGQCVKCGQPSAYGKRVLFGRQY.

Positions 1 to 17 (MTKDGGKKDNQGQDKKA) are enriched in basic and acidic residues. Residues 1-21 (MTKDGGKKDNQGQDKKAQQYG) are disordered.

This sequence belongs to the class-II aminoacyl-tRNA synthetase family. ProS type 3 subfamily. As to quaternary structure, homodimer.

It localises to the cytoplasm. It carries out the reaction tRNA(Pro) + L-proline + ATP = L-prolyl-tRNA(Pro) + AMP + diphosphate. Catalyzes the attachment of proline to tRNA(Pro) in a two-step reaction: proline is first activated by ATP to form Pro-AMP and then transferred to the acceptor end of tRNA(Pro). Can inadvertently accommodate and process cysteine. The polypeptide is Proline--tRNA ligase (proS) (Deinococcus radiodurans (strain ATCC 13939 / DSM 20539 / JCM 16871 / CCUG 27074 / LMG 4051 / NBRC 15346 / NCIMB 9279 / VKM B-1422 / R1)).